The sequence spans 138 residues: uncharacterized protein (138 aa).

This is an uncharacterized protein from Thiocystis violacea.